The chain runs to 265 residues: Indole-3-glycerol phosphate synthase (265 aa).

It belongs to the TrpC family.

It catalyses the reaction 1-(2-carboxyphenylamino)-1-deoxy-D-ribulose 5-phosphate + H(+) = (1S,2R)-1-C-(indol-3-yl)glycerol 3-phosphate + CO2 + H2O. The protein operates within amino-acid biosynthesis; L-tryptophan biosynthesis; L-tryptophan from chorismate: step 4/5. This is Indole-3-glycerol phosphate synthase from Chromobacterium violaceum (strain ATCC 12472 / DSM 30191 / JCM 1249 / CCUG 213 / NBRC 12614 / NCIMB 9131 / NCTC 9757 / MK).